The primary structure comprises 176 residues: Sigma intracellular receptor 2 (176 aa).

The Cytoplasmic portion of the chain corresponds to Met-1–Cys-9. A helical membrane pass occupies residues Val-10 to Leu-30. Positions Val-10–Leu-158 constitute an EXPERA domain. Over Gln-31–Ser-68 the chain is Lumenal. A helical transmembrane segment spans residues Phe-69 to Leu-89. Cholesterol contacts are provided by Val-75 and Gln-77. Topologically, residues Lys-90–Pro-99 are cytoplasmic. The chain crosses the membrane as a helical span at residues Ala-100–Phe-120. Over Glu-121–Arg-140 the chain is Lumenal. A helical transmembrane segment spans residues Leu-141 to Met-161. The Cytoplasmic segment spans residues Leu-162–Lys-176. Positions Lys-172–Lys-176 match the ER retention motif motif.

It belongs to the TMEM97/sigma-2 receptor family. In terms of assembly, homodimer. Interacts with NPC1; the interaction impairs NPC1-mediated cholesterol transport. Interacts with PGRMC1 and LDLR; the interaction increases LDL internalization. Interacts with histatin 1/HTN1; the interaction induces HTN1-stimulating wound healing. Interacts with TSPO.

Its subcellular location is the rough endoplasmic reticulum membrane. It is found in the nucleus membrane. Functionally, sigma-2 receptor which contributes to ameliorate dysfunctional cellular processes and slow degenerative progression by regulating cell functions including cholesterol biosynthesis/trafficking, membrane trafficking, autophagy, lipid membrane-bound protein trafficking, and receptor stabilization at the cell surface. Forms a ternary complex with PGRMC1 receptor and low density lipoprotein receptor/LDLR at the plasma membrane, which increases LDLR-mediated LDL cholesterol internalization. Decreases lysosomal sterol transporter NPC1 availability to the cell, probably through NPC1-binding, hence controlling lipid transport, including cholesterol and LBPA, outside of late endosome/lysosome. Binds regio- and stereoselective ligand 20(S)-hydroxycholesterol (20(S)-OHC) which enhances TMEM97-NPC1 interaction and decreases TMEM97-PGRMC1 and TMEM97-TSPO interactions, thereby linking OHC binding to cholesterol homeostasis. Also able to bind cholesterol. Binds histatin 1 (Hst 1)/HN1 salivary peptide at the ER membrane, which is critical for increasing mitochondria-ER contacts and stimulating Hst1 wound healing properties. May alter the activity of some cytochrome P450 proteins. Although shows homologies with sterol isomerases (EXPERA domain), not able to catalyze sterol isomerization. However, may act as sensors of these molecules. Acts as a quality control factor in the ER, promoting the proteolytic degradation of nonproductive and extramitochondrial precursor proteins in the ER membrane thus removing them from the ER surface. In Macaca fascicularis (Crab-eating macaque), this protein is Sigma intracellular receptor 2 (Tmem97).